The primary structure comprises 523 residues: Ribonuclease Y (523 aa).

Residues 18 to 38 traverse the membrane as a helical segment; it reads WSLTVALVIGGALGFLVVWAF. Residues 213-276 enclose the KH domain; sequence TSTIVSLPNE…EVARGALEAL (64 aa). An HD domain is found at 339-432; sequence VLDHSVETAS…VILADTISAT (94 aa).

It belongs to the RNase Y family.

Its subcellular location is the cell membrane. Its function is as follows. Endoribonuclease that initiates mRNA decay. The sequence is that of Ribonuclease Y from Opitutus terrae (strain DSM 11246 / JCM 15787 / PB90-1).